Consider the following 985-residue polypeptide: NAD kinase 2, chloroplastic (985 aa).

The transit peptide at 1 to 62 (MFLCFCPCHV…KRRLRFVIRA (62 aa)) directs the protein to the chloroplast. The interval 335–380 (APKAEQVELFASIVSDSSKRPIYVHSKEGVWRTSAMVSRWKQYMTR) is calmodulin-binding. Disordered stretches follow at residues 389–466 (SEES…PPGN) and 548–615 (FSNG…DEAG). Basic and acidic residues-rich tracts occupy residues 390–399 (EESKRREVSE) and 413–429 (VPDEQTDKVSEINEVDS). Polar residues predominate over residues 548 to 569 (FSNGNVHASDNTNKSISDNRGN).

It belongs to the NAD kinase family. Expressed in leaves.

It is found in the plastid. It localises to the chloroplast. The enzyme catalyses NAD(+) + ATP = ADP + NADP(+) + H(+). Involved in chlorophyll synthesis and chloroplast protection against oxidative damage. This Arabidopsis thaliana (Mouse-ear cress) protein is NAD kinase 2, chloroplastic (NADK2).